A 386-amino-acid chain; its full sequence is Heat-inducible transcription repressor HrcA (386 aa).

Belongs to the HrcA family.

Functionally, negative regulator of class I heat shock genes (grpE-dnaK-dnaJ and groELS operons). Prevents heat-shock induction of these operons. This is Heat-inducible transcription repressor HrcA from Chlamydia felis (strain Fe/C-56) (Chlamydophila felis).